Consider the following 310-residue polypeptide: p-hydroxybenzoic acid efflux pump subunit AaeA (310 aa).

Residues 12-32 traverse the membrane as a helical segment; the sequence is AITVILVILAFVAIFRAWVYY.

The protein belongs to the membrane fusion protein (MFP) (TC 8.A.1) family.

The protein localises to the cell inner membrane. In terms of biological role, forms an efflux pump with AaeB. This is p-hydroxybenzoic acid efflux pump subunit AaeA from Klebsiella pneumoniae (strain 342).